The primary structure comprises 274 residues: 3-methyl-2-oxobutanoate hydroxymethyltransferase (274 aa).

The Mg(2+) site is built by Asp49 and Asp88. 3-methyl-2-oxobutanoate is bound by residues 49 to 50 (DS), Asp88, and Lys118. Residue Glu120 coordinates Mg(2+). The active-site Proton acceptor is Glu187.

This sequence belongs to the PanB family. Homodecamer; pentamer of dimers. It depends on Mg(2+) as a cofactor.

It is found in the cytoplasm. The enzyme catalyses 3-methyl-2-oxobutanoate + (6R)-5,10-methylene-5,6,7,8-tetrahydrofolate + H2O = 2-dehydropantoate + (6S)-5,6,7,8-tetrahydrofolate. It functions in the pathway cofactor biosynthesis; (R)-pantothenate biosynthesis; (R)-pantoate from 3-methyl-2-oxobutanoate: step 1/2. Its function is as follows. Catalyzes the reversible reaction in which hydroxymethyl group from 5,10-methylenetetrahydrofolate is transferred onto alpha-ketoisovalerate to form ketopantoate. In Rhodopseudomonas palustris (strain TIE-1), this protein is 3-methyl-2-oxobutanoate hydroxymethyltransferase.